A 159-amino-acid polypeptide reads, in one-letter code: Transcriptional repressor NrdR (159 aa).

A zinc finger lies at 3-34 (CPFCRHDDTQVVDSRVSEDGAAIRRRRRCSAC). An ATP-cone domain is found at 49 to 139 (PAVVKKDGSR…VYRRFEDVSE (91 aa)).

The protein belongs to the NrdR family. The cofactor is Zn(2+).

Functionally, negatively regulates transcription of bacterial ribonucleotide reductase nrd genes and operons by binding to NrdR-boxes. The polypeptide is Transcriptional repressor NrdR (Burkholderia thailandensis (strain ATCC 700388 / DSM 13276 / CCUG 48851 / CIP 106301 / E264)).